The following is a 299-amino-acid chain: MATVIDGKNVAASVIQTVKSATAALEKASGVTTGLAVIIVGDDPASHAYVGSKSRMAKECGFKSVQHTLPAETTQEELAGLVATLNADPSIHGILVQLPLPKPLDSEPIIQSILPEKDVDGLSVVNAGKLATGDLKTGLVSCTPAGAMVFVRRTHGEDLSGLNAVVIGRSNLFGKPMAQLLLNANATVTIAHSRTKNLAEVCRNADILVAAVGRPEMVKADWVKPGATVIDVGINRVPAPEKGEGKTRLVGDVAFREVSEIASTITPVPGGVGPMTIAMLMANTVIAAHRAAGQTPPQF.

Residues 168–170 (GRS), serine 193, and isoleucine 234 contribute to the NADP(+) site.

The protein belongs to the tetrahydrofolate dehydrogenase/cyclohydrolase family. Homodimer.

It catalyses the reaction (6R)-5,10-methylene-5,6,7,8-tetrahydrofolate + NADP(+) = (6R)-5,10-methenyltetrahydrofolate + NADPH. The enzyme catalyses (6R)-5,10-methenyltetrahydrofolate + H2O = (6R)-10-formyltetrahydrofolate + H(+). Its pathway is one-carbon metabolism; tetrahydrofolate interconversion. In terms of biological role, catalyzes the oxidation of 5,10-methylenetetrahydrofolate to 5,10-methenyltetrahydrofolate and then the hydrolysis of 5,10-methenyltetrahydrofolate to 10-formyltetrahydrofolate. The protein is Bifunctional protein FolD 1 of Rhizobium etli (strain ATCC 51251 / DSM 11541 / JCM 21823 / NBRC 15573 / CFN 42).